We begin with the raw amino-acid sequence, 233 residues long: Probable transglycosylase IsaA (233 aa).

The N-terminal stretch at 1–29 (MKKTIMASSLAVALGVTGYAAGTGHQAHA) is a signal peptide.

This sequence belongs to the transglycosylase family. IsaA subfamily.

The protein localises to the secreted. Its function is as follows. Is able to cleave peptidoglycan. The sequence is that of Probable transglycosylase IsaA (isaA) from Staphylococcus aureus (strain USA300).